The following is a 173-amino-acid chain: Flavodoxin 2 (173 aa).

One can recognise a Flavodoxin-like domain in the interval 3 to 165 (MGLFYGSSTC…RIQTWCEQIL (163 aa)).

The protein belongs to the flavodoxin family. Requires FMN as cofactor.

Its function is as follows. Low-potential electron donor to a number of redox enzymes. This chain is Flavodoxin 2 (fldB), found in Salmonella typhi.